The chain runs to 364 residues: Transcription factor IIIA (364 aa).

C2H2-type zinc fingers lie at residues 38–62 (FICS…LCKH), 68–92 (FVCD…VLIH), 98–123 (FVCA…ERKH), 130–154 (YVCS…QCQH), 160–184 (FRCT…GKVH), 187–211 (YLCQ…REAH), 215–237 (ITCN…MKTH), 244–269 (YRCP…LSFH), and 275–299 (FVCE…SVVH). The segment at 299 to 364 (HDPDKKRMKL…PPPAALLTVC (66 aa)) is disordered. Over residues 338 to 352 (SLPNASAESSSSPEA) the composition is skewed to low complexity.

It localises to the nucleus. Its function is as follows. Involved in ribosomal large subunit biogenesis. Binds the approximately 50 base pairs internal control region (ICR) of 5S ribosomal RNA genes. It is required for their RNA polymerase III-dependent transcription and may also maintain the transcription of other genes. Also binds the transcribed 5S RNA's. This is Transcription factor IIIA (Gtf3a) from Mus musculus (Mouse).